We begin with the raw amino-acid sequence, 171 residues long: Transcription factor pcr1 (171 aa).

Positions 10-73 (DEKRRRILER…FRLKSQLLAH (64 aa)) constitute a bZIP domain. The segment at 12–51 (KRRRILERNRIAASKFRQKKKEWIKELEQTANAAFEQSKR) is basic motif. Residues 52-66 (LQLLLSQLQQEAFRL) form a leucine-zipper region. The tract at residues 125 to 171 (QMHPSLQGLPPNQHPQMPPSSQQPNSDDVQQHMFSAAGLPRSLGGPI) is disordered. Residues 143 to 152 (PSSQQPNSDD) are compositionally biased toward low complexity.

It belongs to the bZIP family. As to quaternary structure, heterodimer of pcr1/mts2 and atf1/mts1.

It is found in the nucleus. Its function is as follows. Involved in regulation of gene expression for sexual development. Binds and activates CRE sites (cAMP-response elements, also known as M26 meiotic recombination hotspots). The protein is Transcription factor pcr1 (pcr1) of Schizosaccharomyces pombe (strain 972 / ATCC 24843) (Fission yeast).